A 378-amino-acid chain; its full sequence is Ferredoxin--NADP reductase, root isozyme 1, chloroplastic (378 aa).

Residues 1 to 65 (MALSTTPSQM…KRSTICMSLQ (65 aa)) constitute a chloroplast transit peptide. One can recognise an FAD-binding FR-type domain in the interval 93 to 221 (KEPYTATIVS…TGPSGKVMLL (129 aa)). A disulfide bond links cysteine 196 and cysteine 201. Serine 197 carries the phosphoserine modification. A Phosphothreonine modification is found at threonine 229. 231-249 (IMIATGTGVAPYRGYLRRM) is an NADP(+) binding site. Positions 349-373 (LKRVAEERGESWEQKLTQLRKNKQW) form a coiled coil.

This sequence belongs to the ferredoxin--NADP reductase type 1 family. FAD is required as a cofactor. Expressed in shoots and roots. Less abundant in roots than RFNR2.

It localises to the plastid. The protein resides in the chloroplast. It carries out the reaction 2 reduced [2Fe-2S]-[ferredoxin] + NADP(+) + H(+) = 2 oxidized [2Fe-2S]-[ferredoxin] + NADPH. In terms of biological role, maintains the supply of reduced ferredoxin under non-photosynthetic conditions. The protein is Ferredoxin--NADP reductase, root isozyme 1, chloroplastic (RFNR1) of Arabidopsis thaliana (Mouse-ear cress).